Consider the following 21-residue polypeptide: Peptide Hact-2 (21 aa).

3 cysteine pairs are disulfide-bonded: Cys1/Cys18, Cys5/Cys14, and Cys9/Cys20.

Expressed in tentacles.

The protein localises to the nematocyst. Its subcellular location is the secreted. Its function is as follows. Peptide of unknown function. Does not exhibit antimicrobial activity against Escherichia coli and Staphylococcus aureus. Promotes cell proliferation of human fibroblast skin cells. Does not exhibit any effect on voltage-gated ion channels, including potassium, sodium, and calcium channels. The polypeptide is Peptide Hact-2 (Heliofungia actiniformis (Mushroom coral)).